The primary structure comprises 241 residues: Large ribosomal subunit protein uL3 (241 aa).

Disordered stretches follow at residues 139–166 (VSHRSIGSTGGRQDPGKTFKNKKMPGHM) and 209–241 (KKPLPKDAPKPGKFKVAGDDKVTADAPTEKEGA). Gln-151 is modified (N5-methylglutamine).

Belongs to the universal ribosomal protein uL3 family. As to quaternary structure, part of the 50S ribosomal subunit. Forms a cluster with proteins L14 and L19. Methylated by PrmB.

Functionally, one of the primary rRNA binding proteins, it binds directly near the 3'-end of the 23S rRNA, where it nucleates assembly of the 50S subunit. The protein is Large ribosomal subunit protein uL3 of Nitrobacter hamburgensis (strain DSM 10229 / NCIMB 13809 / X14).